We begin with the raw amino-acid sequence, 674 residues long: CLK4-associating serine/arginine rich protein (674 aa).

Serine 101 is subject to Phosphoserine. 2 disordered regions span residues 171–232 (TVAE…GMAD) and 258–674 (EKAM…HYRH). A compositionally biased stretch (acidic residues) spans 182–214 (PEEEESAAEEESNSDEDEVIPDIDVEVDVDELN). Residues 265–283 (RRSRRQRREFREKRLRGRK) show a composition bias toward basic residues. Phosphoserine is present on residues serine 285 and serine 294. A compositionally biased stretch (basic and acidic residues) spans 290 to 313 (ARRDSPTYDPYKRSPSESSSESRS). Threonine 327 is subject to Phosphothreonine. 2 positions are modified to phosphoserine: serine 331 and serine 335. The span at 356 to 365 (PPAPPQPGGP) shows a compositional bias: pro residues. Low complexity predominate over residues 378–399 (SSSSSSSSASRTSSSRSSSRSS). 2 stretches are compositionally biased toward basic residues: residues 411 to 443 (SGRHARSRSRSWSRSRSRSRRYSRSRSRGRRHS) and 481 to 492 (RGGRGLRHHSSS). Low complexity-rich tracts occupy residues 493–506 (RSRSSWSLSPSRSR) and 514–532 (HSPSPSQSRSRSRSRSQSP). The residue at position 547 (serine 547) is a Phosphoserine. The residue at position 573 (threonine 573) is a Phosphothreonine. Residues 585–647 (ALNRQFKADK…ERQYSRQSRS (63 aa)) are a coiled coil. Composition is skewed to basic and acidic residues over residues 590-617 (FKADKKAAQEKMIQQEHERQEREDELRA) and 625-641 (KERERREKEREEWERQY). A compositionally biased stretch (low complexity) spans 642–651 (SRQSRSPSPR). Residues 659 to 674 (SRRRSRSRSRSPHYRH) are compositionally biased toward basic residues.

It belongs to the splicing factor SR family. In terms of assembly, probably interacts with CLK4. Phosphorylated in vitro by CLK4.

Its subcellular location is the nucleus. Functionally, probably functions as an alternative splicing regulator. May regulate the mRNA splicing of genes such as CLK1. May act by regulating members of the CLK kinase family. The protein is CLK4-associating serine/arginine rich protein (CLASRP) of Homo sapiens (Human).